Reading from the N-terminus, the 121-residue chain is Large ribosomal subunit protein bL20 (121 aa).

It belongs to the bacterial ribosomal protein bL20 family.

Functionally, binds directly to 23S ribosomal RNA and is necessary for the in vitro assembly process of the 50S ribosomal subunit. It is not involved in the protein synthesizing functions of that subunit. This chain is Large ribosomal subunit protein bL20, found in Francisella tularensis subsp. mediasiatica (strain FSC147).